The sequence spans 243 residues: L-fucose operon activator (243 aa).

One can recognise an HTH deoR-type domain in the interval 1–57 (MKAARQQAIVDLLLNHTSLTTEALSEQLKVSKETIRRDLNELQTQGKILRNHGRAKY). The segment at residues 19 to 38 (LTTEALSEQLKVSKETIRRD) is a DNA-binding region (H-T-H motif).

Transcriptional activator of the fuc operon. This chain is L-fucose operon activator (fucR), found in Escherichia coli (strain K12).